The chain runs to 248 residues: 4-hydroxy-tetrahydrodipicolinate reductase (248 aa).

Residues aspartate 32, 74 to 76, and 99 to 102 contribute to the NAD(+) site; these read GTT and SANF. Histidine 134 acts as the Proton donor/acceptor in catalysis. Histidine 135 is a (S)-2,3,4,5-tetrahydrodipicolinate binding site. Catalysis depends on lysine 138, which acts as the Proton donor. Residue 144–145 participates in (S)-2,3,4,5-tetrahydrodipicolinate binding; it reads GT.

It belongs to the DapB family.

The protein localises to the cytoplasm. The enzyme catalyses (S)-2,3,4,5-tetrahydrodipicolinate + NAD(+) + H2O = (2S,4S)-4-hydroxy-2,3,4,5-tetrahydrodipicolinate + NADH + H(+). It catalyses the reaction (S)-2,3,4,5-tetrahydrodipicolinate + NADP(+) + H2O = (2S,4S)-4-hydroxy-2,3,4,5-tetrahydrodipicolinate + NADPH + H(+). It functions in the pathway amino-acid biosynthesis; L-lysine biosynthesis via DAP pathway; (S)-tetrahydrodipicolinate from L-aspartate: step 4/4. Functionally, catalyzes the conversion of 4-hydroxy-tetrahydrodipicolinate (HTPA) to tetrahydrodipicolinate. The sequence is that of 4-hydroxy-tetrahydrodipicolinate reductase from Chlorobium limicola (strain DSM 245 / NBRC 103803 / 6330).